The primary structure comprises 184 residues: MTHLTVYPDTDPATVLLDTRDGAEIAASLSGIGVVFERWDAPHALGEDADQTAVLAAYEADVKRLMDEGGYKSVDVVRVKPDNPNRAEMRQKFLAEHTHDDDEVRFFVEGAGAFYLRKDGRVYRVVCERNDLISVPAGTTHWFDTGAAPHFCAIRIFTSPEGWVGHFTGDDIATRFPKFESEPQ.

Residues His97, His99, Glu103, and His141 each coordinate Fe(2+). Residues His97, His99, Glu103, and His141 each contribute to the Ni(2+) site.

It belongs to the acireductone dioxygenase (ARD) family. In terms of assembly, monomer. Fe(2+) serves as cofactor. Requires Ni(2+) as cofactor.

It carries out the reaction 1,2-dihydroxy-5-(methylsulfanyl)pent-1-en-3-one + O2 = 3-(methylsulfanyl)propanoate + CO + formate + 2 H(+). The catalysed reaction is 1,2-dihydroxy-5-(methylsulfanyl)pent-1-en-3-one + O2 = 4-methylsulfanyl-2-oxobutanoate + formate + 2 H(+). Its pathway is amino-acid biosynthesis; L-methionine biosynthesis via salvage pathway; L-methionine from S-methyl-5-thio-alpha-D-ribose 1-phosphate: step 5/6. Functionally, catalyzes 2 different reactions between oxygen and the acireductone 1,2-dihydroxy-3-keto-5-methylthiopentene (DHK-MTPene) depending upon the metal bound in the active site. Fe-containing acireductone dioxygenase (Fe-ARD) produces formate and 2-keto-4-methylthiobutyrate (KMTB), the alpha-ketoacid precursor of methionine in the methionine recycle pathway. Ni-containing acireductone dioxygenase (Ni-ARD) produces methylthiopropionate, carbon monoxide and formate, and does not lie on the methionine recycle pathway. The sequence is that of Acireductone dioxygenase from Parvibaculum lavamentivorans (strain DS-1 / DSM 13023 / NCIMB 13966).